We begin with the raw amino-acid sequence, 135 residues long: Thyrostimulin beta-5 subunit (135 aa).

The signal sequence occupies residues 1 to 19 (MVMPLVLSLALTPPPLCHA). 5 disulfides stabilise this stretch: C30/C87, C54/C102, C63/C118, C67/C120, and C123/C130.

It belongs to the glycoprotein hormones subunit beta family. In terms of assembly, heterodimer with GPHA2; non-covalently-linked. As to expression, expressed by the venom duct.

Its subcellular location is the secreted. The chain is Thyrostimulin beta-5 subunit from Conus victoriae (Queen Victoria cone).